The primary structure comprises 263 residues: Acyl-[acyl-carrier-protein]--UDP-N-acetylglucosamine O-acyltransferase (263 aa).

It belongs to the transferase hexapeptide repeat family. LpxA subfamily. Homotrimer.

The protein localises to the cytoplasm. It carries out the reaction a (3R)-hydroxyacyl-[ACP] + UDP-N-acetyl-alpha-D-glucosamine = a UDP-3-O-[(3R)-3-hydroxyacyl]-N-acetyl-alpha-D-glucosamine + holo-[ACP]. Its pathway is glycolipid biosynthesis; lipid IV(A) biosynthesis; lipid IV(A) from (3R)-3-hydroxytetradecanoyl-[acyl-carrier-protein] and UDP-N-acetyl-alpha-D-glucosamine: step 1/6. In terms of biological role, involved in the biosynthesis of lipid A, a phosphorylated glycolipid that anchors the lipopolysaccharide to the outer membrane of the cell. The chain is Acyl-[acyl-carrier-protein]--UDP-N-acetylglucosamine O-acyltransferase from Xanthomonas campestris pv. campestris (strain 8004).